The following is a 198-amino-acid chain: MMQDVSSSPVSPADDSLSNSEEEPDRQQPPSGKRGGRKRRSSRRSAGGGAGPGGAAGGVGGGDEPGSPAQGKRGKKSAGCGGGAGGGGSSSGGGSPQSYEELQTQRVMANVRERQRTQSLNEAFAALRKIIPTLPSDKLSKIQTLKLAARYIDFLYQVLQSDELDSKMASCSYVAHERLSYAFSVWRMEGAWSMSASH.

A compositionally biased stretch (low complexity) spans 1–18 (MMQDVSSSPVSPADDSLS). Residues 1-101 (MMQDVSSSPV…GGGSPQSYEE (101 aa)) are disordered. Over residues 34–43 (RGGRKRRSSR) the composition is skewed to basic residues. Gly residues-rich tracts occupy residues 46–64 (AGGG…GGDE) and 79–95 (GCGG…GGGS). The 52-residue stretch at 104 to 155 (TQRVMANVRERQRTQSLNEAFAALRKIIPTLPSDKLSKIQTLKLAARYIDFL) folds into the bHLH domain. Residues 157–187 (QVLQSDELDSKMASCSYVAHERLSYAFSVWR) form a sufficient for transactivation activity region.

Efficient DNA binding requires dimerization with another bHLH protein. Homodimer or heterodimer with E proteins such as TCF3. ID1 binds preferentially to TCF3 but does not interact efficiently with TWIST1 so ID1 levels control the amount of TCF3 available to dimerize with TWIST and thus determine the type of dimer formed.

The protein localises to the nucleus. In terms of biological role, acts as a transcriptional regulator. Inhibits myogenesis by sequestrating E proteins, inhibiting trans-activation by MEF2, and inhibiting DNA-binding by MYOD1 through physical interaction. This interaction probably involves the basic domains of both proteins. Also represses expression of pro-inflammatory cytokines such as TNFA and IL1B. Regulates cranial suture patterning and fusion. Activates transcription as a heterodimer with E proteins. Regulates gene expression differentially, depending on dimer composition. Homodimers induce expression of FGFR2 and POSTN while heterodimers repress FGFR2 and POSTN expression and induce THBS1 expression. Heterodimerization is also required for osteoblast differentiation. Represses the activity of the circadian transcriptional activator: NPAS2-BMAL1 heterodimer. The sequence is that of Twist-related protein 1 (TWIST1) from Eulemur fulvus fulvus (Brown lemur).